A 259-amino-acid polypeptide reads, in one-letter code: Type III pantothenate kinase (259 aa).

Position 6–13 (6–13 (DCGNTNTV)) interacts with ATP. 107–110 (GPDR) contributes to the substrate binding site. Residue Asp-109 is the Proton acceptor of the active site. Asp-129 is a K(+) binding site. Residue Thr-132 coordinates ATP. Thr-184 serves as a coordination point for substrate.

It belongs to the type III pantothenate kinase family. Homodimer. The cofactor is NH4(+). Requires K(+) as cofactor.

It localises to the cytoplasm. It carries out the reaction (R)-pantothenate + ATP = (R)-4'-phosphopantothenate + ADP + H(+). It functions in the pathway cofactor biosynthesis; coenzyme A biosynthesis; CoA from (R)-pantothenate: step 1/5. In terms of biological role, catalyzes the phosphorylation of pantothenate (Pan), the first step in CoA biosynthesis. The chain is Type III pantothenate kinase from Jannaschia sp. (strain CCS1).